A 502-amino-acid chain; its full sequence is Probable malate:quinone oxidoreductase (502 aa).

This sequence belongs to the MQO family. FAD serves as cofactor.

It catalyses the reaction (S)-malate + a quinone = a quinol + oxaloacetate. It functions in the pathway carbohydrate metabolism; tricarboxylic acid cycle; oxaloacetate from (S)-malate (quinone route): step 1/1. This Oceanobacillus iheyensis (strain DSM 14371 / CIP 107618 / JCM 11309 / KCTC 3954 / HTE831) protein is Probable malate:quinone oxidoreductase.